The chain runs to 93 residues: Acylphosphatase (93 aa).

The 89-residue stretch at 5–93 (AKQIVVRGRV…PNFRGFQVTG (89 aa)) folds into the Acylphosphatase-like domain. Residues Arg-20 and Asn-38 contribute to the active site.

The protein belongs to the acylphosphatase family.

The catalysed reaction is an acyl phosphate + H2O = a carboxylate + phosphate + H(+). The sequence is that of Acylphosphatase (acyP) from Lacticaseibacillus paracasei (strain ATCC 334 / BCRC 17002 / CCUG 31169 / CIP 107868 / KCTC 3260 / NRRL B-441) (Lactobacillus paracasei).